A 198-amino-acid polypeptide reads, in one-letter code: Putative mycofactocin biosynthesis transcriptional regulator MftR (198 aa).

In terms of domain architecture, HTH tetR-type spans 12-72 (STTPHHISDV…GDFSTHLAQL (61 aa)). Residues 35–54 (SVDDIARAAGIARRTLFRYY) constitute a DNA-binding region (H-T-H motif).

May regulate a gene cluster involved in mycofactocin expression. Mycofactocin is a conserved polypeptide that might serve as an electron carrier. In Mycobacterium tuberculosis (strain ATCC 25618 / H37Rv), this protein is Putative mycofactocin biosynthesis transcriptional regulator MftR (mftR).